The sequence spans 642 residues: Terminase, large subunit (642 aa).

The tract at residues 1–48 (MISDAQKAANAAGAIATGLLSLIIPVPLTTVQWANKHYYLPKESSYTP) is interaction with the terminase small subunit. The Q motif signature appears at 42–51 (KESSYTPGRW). Residues 76–83 (KSARVGYT) carry the Walker A motif motif. A DNA packaging/ATPase region spans residues 166 to 353 (NYREKSVDVV…LDALKDPNGL (188 aa)). Residues 174 to 179 (VVCYDE) carry the Walker B motif motif. Catalysis depends on E179, which acts as the For ATPase activity. D401 contacts Mg(2+). The endonuclease stretch occupies residues 401-587 (DSQRNRFEMY…LWDNKKRRNE (187 aa)). 491-498 (GASVYGKP) provides a ligand contact to ATP. The segment at 574-585 (KMRLLWDNKKRR) is basic. The segment at 589-617 (LDCLVYAYAALRVSVQRWQLDLAVLAKSR) is leucine zipper. Positions 611–642 (AVLAKSREEETTRPTLKELAAKLSGGVNGYSR) are prohead binding.

The protein belongs to the lambdavirus large terminase family. As to quaternary structure, heterotrimer of two small and one large terminase subunits. The catalytically competent terminase is composed of a tetramer of heterotrimers. The tetramer forms a ring structure large enough to encircle duplex DNA. Host IHFA/IHFB induces bending of viral DNA to facilitate the assembly of the terminase tetramer of heterotrimers. Interacts (via N-terminus) with the terminase small subunit (via C-terminus). Interacts (via C-terminus) with the portal protein; this interaction allows the packaging of viral DNA. Requires Mg(2+) as cofactor.

Its subcellular location is the host cytoplasm. It carries out the reaction Endonucleolytic cleavage of DNA to give specific double-stranded fragments with terminal 5'-phosphates.. Functionally, the terminase large subunit acts as an ATP driven molecular motor necessary for viral DNA translocation into empty capsids and as an endonuclease that cuts the viral genome from the concetamer to initiate and to end the packaging reaction. The terminase lies at a unique vertex of the procapsid and is composed of two subunits, a small terminase subunit involved in viral DNA recognition (binding to packaging sequence cos), and a large terminase subunit possessing endonucleolytic and ATPase activities (DNA maturation and packaging). The terminase binds cooperatively with the host factor IHFA/IHFB to the cos site at the junction of adjacent viral genomes. The endonuclease activity cleaves the viral DNA generating 5'overhangs of 12 bp in length. The strand separation activity separates the cohesive ends generating the single-stranded 'sticky' ends of the mature genome. IHFA/IHFB is also necessary for the strand separation activity of the terminase. The terminase remains bound to the left end of the genome to be packaged, forming a stable DNA-terminase complex. In a reaction facilitated by the viral assembly catalyst gpFI, the DNA-terminase complex binds to the portal of the procapsid thereby activating the translocase activity of the terminase. The terminase packages the viral DNA into the procapsid until the next cos site on the concatemer reaches the complex. The downstream cos site is then cut generating the mature right end of the genome, the heterotrimer undocks from the DNA-filled head and remains bound to the left end of concatemer's next genome. The polypeptide is Terminase, large subunit (2) (Escherichia coli (Bacteriophage 21)).